Consider the following 168-residue polypeptide: Large ribosomal subunit protein bL9 (168 aa).

The segment at 148–168 is disordered; it reads ENGEGSVQPAAEAAEVASTEA. Residues 157 to 168 are compositionally biased toward low complexity; that stretch reads AAEAAEVASTEA.

Belongs to the bacterial ribosomal protein bL9 family.

Functionally, binds to the 23S rRNA. This Herpetosiphon aurantiacus (strain ATCC 23779 / DSM 785 / 114-95) protein is Large ribosomal subunit protein bL9.